A 273-amino-acid chain; its full sequence is Large ribosomal subunit protein uL2cz/uL2cy (273 aa).

Disordered stretches follow at residues 1–22 (MAKHLYKTPIPSTRKGTVDRQV) and 225–273 (PVDH…RRRK).

Belongs to the universal ribosomal protein uL2 family. Part of the 50S ribosomal subunit.

Its subcellular location is the plastid. It is found in the chloroplast. In Saccharum hybrid (Sugarcane), this protein is Large ribosomal subunit protein uL2cz/uL2cy (rpl2-A).